We begin with the raw amino-acid sequence, 130 residues long: MSEIPSDLKYIETHQWVRVDADGTATVGITDFAQEQLGDVVYIGVPEMGATVNGGEEAGVAESVKSASDVFSPVTGEVIEINEKLEDEPEIVNEDPYGDGWMFKVKLADEGELEGLMDAAAYAEHVAAEE.

The 83-residue stretch at Thr24 to Lys106 folds into the Lipoyl-binding domain. An N6-lipoyllysine modification is found at Lys65.

This sequence belongs to the GcvH family. As to quaternary structure, the glycine cleavage system is composed of four proteins: P, T, L and H. (R)-lipoate serves as cofactor.

Its function is as follows. The glycine cleavage system catalyzes the degradation of glycine. The H protein shuttles the methylamine group of glycine from the P protein to the T protein. This chain is Glycine cleavage system H protein, found in Marinobacter nauticus (strain ATCC 700491 / DSM 11845 / VT8) (Marinobacter aquaeolei).